Reading from the N-terminus, the 302-residue chain is 33 kDa chaperonin (302 aa).

2 disulfides stabilise this stretch: C247/C249 and C280/C283.

This sequence belongs to the HSP33 family. In terms of processing, under oxidizing conditions two disulfide bonds are formed involving the reactive cysteines. Under reducing conditions zinc is bound to the reactive cysteines and the protein is inactive.

Its subcellular location is the cytoplasm. Redox regulated molecular chaperone. Protects both thermally unfolding and oxidatively damaged proteins from irreversible aggregation. Plays an important role in the bacterial defense system toward oxidative stress. This Prochlorococcus marinus (strain MIT 9301) protein is 33 kDa chaperonin.